The primary structure comprises 577 residues: Galectin-3-binding protein (577 aa).

Positions M1–G18 are cleaved as a signal peptide. The SRCR domain occupies M24–S124. Intrachain disulfides connect C49-C113, C62-C123, and C93-C103. The N-linked (GlcNAc...) asparagine glycan is linked to N69. Residue N125 is glycosylated (N-linked (GlcNAc...) asparagine). In terms of domain architecture, BTB spans C153 to M221. Residues P260–Q360 form the BACK domain. 4 N-linked (GlcNAc...) asparagine glycosylation sites follow: N362, N398, N543, and N572.

Homodimers and homomultimers. The multimers form ring-like structures with a diameter of 30-40 nm. Binds LGALS1 and LGALS3. Binds ITGB1, COL4A1, COL5A1, COL6A1, FN1 and NID. Interacts with PPIC (in vitro). The unglycosylated form interacts with PDE4DIP isoform 2/MMG8/SMYLE; this interaction may connect a pericentrosomal complex to the gamma-tubulin ring complex (gamma-TuRC) to promote microtubule assembly and acetylation. Post-translationally, N-glycosylated. As to expression, detected in embryo, liver, spleen, kidney, lung, heart, intestine, thymus and lymph node.

It is found in the secreted. Its subcellular location is the extracellular space. The protein localises to the extracellular matrix. Promotes integrin-mediated cell adhesion. May stimulate host defense against viruses and tumor cells. This chain is Galectin-3-binding protein (Lgals3bp), found in Mus musculus (Mouse).